The sequence spans 278 residues: Nucleotide-binding protein Tbd_0529 (278 aa).

8 to 15 lines the ATP pocket; it reads GLSGSGKS. Residue 57–60 coordinates GTP; the sequence is DARS.

This sequence belongs to the RapZ-like family.

Its function is as follows. Displays ATPase and GTPase activities. This Thiobacillus denitrificans (strain ATCC 25259 / T1) protein is Nucleotide-binding protein Tbd_0529.